The chain runs to 311 residues: MKYADISLRLYMVFLRKYLESCGCEPDLIALIRLISRQMDPIRKAFLDNQMYEHTLNASGELQAQMDTWADEHLIKVVGESGLVRELASEEQADIIRFENSRCEYCMVMDPLDGSSLISTNLAVGTIVGIYENGGVLQPGSKLRAAFYTLFGPLTVLVVSVGKGVQSFAWDPESEHYLLLKDHFSVPEGKQYGTGGVRNEWLLPHLKVIEYFDQNGFKIRYSGSFVADCHQLLVYGGIYTYPGSEKSPNGKFRLLFEANPLGFIITQAGGRITDGRRNILNIVPEKHHQKTPVYIGSKGIIEKIEEIYKNL.

Residues Glu90, Asp110, Leu112, and Asp113 each contribute to the Mg(2+) site. Substrate contacts are provided by residues 113 to 116 (DGSS), Tyr221, and Lys251. Glu257 is a Mg(2+) binding site.

Belongs to the FBPase class 1 family. Homotetramer. Mg(2+) is required as a cofactor.

The protein localises to the cytoplasm. The catalysed reaction is beta-D-fructose 1,6-bisphosphate + H2O = beta-D-fructose 6-phosphate + phosphate. Its pathway is carbohydrate biosynthesis; gluconeogenesis. This is Fructose-1,6-bisphosphatase class 1 from Methanospirillum hungatei JF-1 (strain ATCC 27890 / DSM 864 / NBRC 100397 / JF-1).